Here is a 352-residue protein sequence, read N- to C-terminus: MDFHIRNSNLQEIEVRRKPHSRSPKIQQTEAEATAMNFRIPATASSIPTKYQTVFIPTSEKNGFNSRSLRFSYSLTQNENPGPGAYNVARTSADINSVSLSKKGTGGFPSKAPRTLQCKIARTPAPNAYNVYEEFFSKKDFSKGNSSMFQQPIAMEVEDTNHLTPAPNQYSASLTYCHPNNNVSAHAAFVSKTKRELLKPNPVKGPSPCHYKINDSLVKESTKVPVSCFKSKTSRNSLNVISDNPGPASYDPYKSSESEKKIIFLRKHYLCFSAPAMPIPKAPPVPGPGHYDIVDYEGLPKQYMSGAAFVSNTSRWAGDVSGKSLPGPGAYHPEIPGRYSFLYNSNRKWVPA.

7 STPGR repeats span residues 80–90 (NPGPGAYNVAR), 124–139 (PAPN…FSKK), 165–171 (PAPNQYS), 205–235 (GPSP…KTSR), 244–263 (NPGP…KKII), 286–295 (PGPGHYDIVD), and 325–335 (LPGPGAYHPEI).

This sequence belongs to the STPG1 family.

It localises to the cytoplasm. The protein localises to the nucleus. Its function is as follows. May positively contribute to the induction of apoptosis triggered by O(6)-methylguanine. The polypeptide is O(6)-methylguanine-induced apoptosis 2 (stpg1) (Xenopus laevis (African clawed frog)).